Here is a 341-residue protein sequence, read N- to C-terminus: GTP-binding protein REM 2 (341 aa).

The span at 1 to 13 (MHTDLDTDMDADT) shows a compositional bias: acidic residues. Disordered regions lie at residues 1 to 72 (MHTD…SMPV) and 84 to 106 (VDEL…GSGE). The span at 18-32 (LCSSSSRQASPSGTP) shows a compositional bias: polar residues. Ser27 carries the post-translational modification Phosphoserine. Positions 43-54 (QKPEKLLAELDR) are enriched in basic and acidic residues. Low complexity predominate over residues 94–105 (SSSGSSDSLGSG). GTP contacts are provided by residues 122-129 (GESGVGKS), 230-233 (NKSD), and 261-262 (AA). Positions 282–309 (RGRGHAGGQRPEPSSPDGPAPPTRRESL) are disordered. Positions 294–303 (PSSPDGPAPP) are enriched in pro residues. Ser296 carries the phosphoserine modification.

This sequence belongs to the small GTPase superfamily. RGK family. In terms of tissue distribution, expressed in brain and kidney.

It localises to the cell membrane. Binds GTP saturably and exhibits a low intrinsic rate of GTP hydrolysis. The polypeptide is GTP-binding protein REM 2 (Rem2) (Rattus norvegicus (Rat)).